The following is a 208-amino-acid chain: MSIRVKVCGITRVEDALAAVHLGANAVGFVFWEQSARYISPAEARGIVSTLPPFVTSVGVYVDPEAGWVDESISVAGLNLLQFHGSESPEFCQQFSLPYIKAVRVRPGLDLLQYASLYTGATGLLLDTYVEGEPGGTGEAFDWNLIPRNLPLPLILSGGLHAGNVTSAIQQAHPWAVDVSSGVEAAKGIKDSGKIAAFMRGVGISESL.

It belongs to the TrpF family.

It catalyses the reaction N-(5-phospho-beta-D-ribosyl)anthranilate = 1-(2-carboxyphenylamino)-1-deoxy-D-ribulose 5-phosphate. It participates in amino-acid biosynthesis; L-tryptophan biosynthesis; L-tryptophan from chorismate: step 3/5. In Nitrosospira multiformis (strain ATCC 25196 / NCIMB 11849 / C 71), this protein is N-(5'-phosphoribosyl)anthranilate isomerase.